The sequence spans 30 residues: Varv peptide H (30 aa).

Residues 1–30 constitute a cross-link (cyclopeptide (Gly-Asn)); sequence GLPVCGETCFGGTCNTPGCSCETWPVCSRN. 3 disulfides stabilise this stretch: Cys5-Cys19, Cys9-Cys21, and Cys14-Cys27.

This is a cyclic peptide.

Functionally, probably participates in a plant defense mechanism. The polypeptide is Varv peptide H (Viola arvensis (European field pansy)).